The primary structure comprises 836 residues: MTATAEVETPKMEKSASKEEKQQPKQDSTEQGNADSEEWMSSESDPEQISLKSSDNSKSCQPRDGQLKKKEMHSKPHRQLCRSPCLDRPSFSQSSILQDGKLDLEKEYQAKMEFALKLGYAEEQIQSVLNKLGPESLINDVLAELVRLGNKGDSEGQINLSLLVPRGPSSREIASPELSLEDEIDNSDNLRPVVIDGSNVAMSHGNKEEFSCRGIQLAVDWFLDKGHKDITVFVPAWRKEQSRPDAPITDQDILRKLEKEKILVFTPSRRVQGRRVVCYDDRFIVKLAFDSDGIIVSNDNYRDLQVEKPEWKKFIEERLLMYSFVNDKFMPPDDPLGRHGPSLENFLRKRPIVPEHKKQPCPYGKKCTYGHKCKYYHPERANQPQRSVADELRISAKLSTVKTMSEGTLAKCGTGMSSAKGEITSEVKRVAPKRQSDPSIRSVAMEPEEWLSIARKPEASSVPSLVTALSVPTIPPPKSHAVGALNTRSASSPVPGSSHFPHQKASLEHMASMQYPPILVTNSHGTPISYAEQYPKFESMGDHGYYSMLGDFSKLNINSMHNREYYMAEVDRGVYARNPNLCSDSRVSHTRNDNYSSYNNVYLAVADTHPEGNLKLHRSASQNRLQPFPHGYHEALTRVQSYGPEDSKQGPHKQSVPHLALHAQHPSTGTRSSCPADYPMPPNIHPGATPQPGRALVMTRMDSISDSRLYESNPVRQRRPPLCREQHASWDPLPCTTDSYGYHSYPLSNSLMQPCYEPVMVRSVPEKMEQLWRNPWVGMCNDSREHMIPEHQYQTYKNLCNIFPSNIVLAVMEKNPHTADAQQLAALIVAKLRAAR.

The interval M1 to S92 is disordered. The segment covering E8–S28 has biased composition (basic and acidic residues). Residues D35–P46 are compositionally biased toward acidic residues. Residues S50–C60 show a composition bias toward polar residues. Positions K70–L80 are enriched in basic residues. Residues L190 to N345 enclose the RNase NYN domain. A C3H1-type zinc finger spans residues E355–R380.

Belongs to the ZC3H12 family. Mg(2+) is required as a cofactor.

May function as RNase and regulate the levels of target RNA species. The sequence is that of Probable ribonuclease ZC3H12B (ZC3H12B) from Homo sapiens (Human).